The chain runs to 394 residues: Elongation factor Tu (394 aa).

The tr-type G domain occupies 10–204; sequence KPHVNVGTIG…ALDSYIPEPQ (195 aa). A G1 region spans residues 19-26; sequence GHVDHGKT. Residue 19 to 26 participates in GTP binding; that stretch reads GHVDHGKT. Thr26 is a binding site for Mg(2+). Residues 60–64 form a G2 region; sequence GITIN. The tract at residues 81-84 is G3; it reads DCPG. GTP-binding positions include 81–85 and 136–139; these read DCPGH and NKCD. The tract at residues 136 to 139 is G4; that stretch reads NKCD. The tract at residues 174-176 is G5; it reads SAL.

Belongs to the TRAFAC class translation factor GTPase superfamily. Classic translation factor GTPase family. EF-Tu/EF-1A subfamily. As to quaternary structure, monomer.

It localises to the cytoplasm. It catalyses the reaction GTP + H2O = GDP + phosphate + H(+). Functionally, GTP hydrolase that promotes the GTP-dependent binding of aminoacyl-tRNA to the A-site of ribosomes during protein biosynthesis. The chain is Elongation factor Tu from Shewanella baltica (strain OS185).